A 545-amino-acid polypeptide reads, in one-letter code: DNA-binding protein REPIN1 (545 aa).

Residues methionine 1–lysine 50 are disordered. Serine 27 is modified (phosphoserine). Lysine 39 is modified (N6-acetyllysine). Residues histidine 52–cysteine 74 form a C2H2-type 1; atypical zinc finger. 2 consecutive C2H2-type zinc fingers follow at residues leucine 80–histidine 102 and phenylalanine 111–histidine 133. The C2H2-type 4; atypical zinc-finger motif lies at isoleucine 140–cysteine 162. 11 C2H2-type zinc fingers span residues phenylalanine 172–histidine 194, phenylalanine 229–histidine 251, histidine 257–histidine 279, tyrosine 285–histidine 307, histidine 353–histidine 375, phenylalanine 381–histidine 403, phenylalanine 409–histidine 431, phenylalanine 437–histidine 459, tyrosine 465–histidine 487, tyrosine 493–histidine 515, and phenylalanine 521–histidine 543. Position 269 is an N6-acetyllysine (lysine 269).

In terms of assembly, homodimers and homomultimers. Found in a complex with RIP60 and RIP100.

Its subcellular location is the nucleus. The protein resides in the cytoplasm. It localises to the cytosol. Its function is as follows. Sequence-specific double-stranded DNA-binding protein. Binds ATT-rich and T-rich DNA sequences and facilitates DNA bending. May regulate the expression of genes involved in cellular fatty acid import, including SCARB1/CD36, and genes involved in lipid droplet formation. May regulate the expression of LCN2, and thereby influence iron metabolism and apoptosis-related pathways. May regulate the expression of genes involved in glucose transport. The sequence is that of DNA-binding protein REPIN1 (Repin1) from Mus musculus (Mouse).